Consider the following 532-residue polypeptide: MGKRVAIIGAGVSGLASIRSCLEEGLEPTCFERSEDIGGLWKFSEHAEEGRASIYQSVFTNSSKEMMCFPDFPYPDDFPNFMHNSKLQEYITVFSKEKNLLKYIQFKTLVCSVNKRPDFSVSGQWDITTERDGKRESATFDAVLICSGHHVYPNLPEESFPGLKLFKGKCFHSREYKEPGIFKGKRVLVIGLGNSGCDIATELSHTAEQVIISSRSGSWVMSRVWDDGYPWDMMFITRFETFLKNSLPTIISDWWYMKQMNARFKHENYGLMPLNGTLRKEPVFNDELPACILCGTVSIKPNVKAFTETSAIFEDGTVFEAIDCVIFATGYNYAYPFLDESIIKSKNNEITLFKGIFPPKLEKPTMAVIGFVQSLGATIPTTDLQARWAVQVIKGTCTLPSVTDMMNDIDKKREGKLKWFGTSETVQTDYISYMDELASFIGAKPNIPWLFLTDPKLAVEVFFGPCSPYQFRLVGPGKWPGARNAILTQWDRTLKPMKTRAVGNPQKPCMLCHLVKLFVLPVLFIAVFLALI.

FAD-binding positions include 9–13 (GAGVS), glutamate 32, 40–41 (LW), and 61–62 (NS). NADP(+) contacts are provided by residues 60-61 (TN) and 195-198 (SGCD). Serine 401 is modified (phosphoserine). The helical transmembrane segment at 512 to 532 (CHLVKLFVLPVLFIAVFLALI) threads the bilayer.

The protein belongs to the FMO family. Requires FAD as cofactor.

It is found in the microsome membrane. The protein localises to the endoplasmic reticulum membrane. It catalyses the reaction trimethylamine + NADPH + O2 = trimethylamine N-oxide + NADP(+) + H2O. It carries out the reaction N,N-dimethylaniline + NADPH + O2 + H(+) = N,N-dimethylaniline N-oxide + NADP(+) + H2O. The catalysed reaction is hypotaurine + NADPH + O2 + H(+) = taurine + NADP(+) + H2O. The enzyme catalyses (S)-nicotine + NADPH + O2 = trans-(S)-nicotine N(1')-oxide + NADP(+) + H2O. It catalyses the reaction albendazole + NADPH + O2 + H(+) = albendazole S-oxide + NADP(+) + H2O. Its function is as follows. Essential hepatic enzyme that catalyzes the oxygenation of a wide variety of nitrogen- and sulfur-containing compounds including drugs as well as dietary compounds. Plays an important role in the metabolism of trimethylamine (TMA), via the production of trimethylamine N-oxide (TMAO) metabolite. TMA is generated by the action of gut microbiota using dietary precursors such as choline, choline containing compounds, betaine or L-carnitine. By regulating TMAO concentration, FMO3 directly impacts both platelet responsiveness and rate of thrombus formation. The polypeptide is Flavin-containing monooxygenase 3 (FMO3) (Canis lupus familiaris (Dog)).